The sequence spans 145 residues: D-aminoacyl-tRNA deacylase (145 aa).

A Gly-cisPro motif, important for rejection of L-amino acids motif is present at residues 137-138 (GP).

This sequence belongs to the DTD family. In terms of assembly, homodimer.

It is found in the cytoplasm. The catalysed reaction is glycyl-tRNA(Ala) + H2O = tRNA(Ala) + glycine + H(+). It catalyses the reaction a D-aminoacyl-tRNA + H2O = a tRNA + a D-alpha-amino acid + H(+). In terms of biological role, an aminoacyl-tRNA editing enzyme that deacylates mischarged D-aminoacyl-tRNAs. Also deacylates mischarged glycyl-tRNA(Ala), protecting cells against glycine mischarging by AlaRS. Acts via tRNA-based rather than protein-based catalysis; rejects L-amino acids rather than detecting D-amino acids in the active site. By recycling D-aminoacyl-tRNA to D-amino acids and free tRNA molecules, this enzyme counteracts the toxicity associated with the formation of D-aminoacyl-tRNA entities in vivo and helps enforce protein L-homochirality. The sequence is that of D-aminoacyl-tRNA deacylase from Shewanella frigidimarina (strain NCIMB 400).